Consider the following 283-residue polypeptide: Pantothenate synthetase (283 aa).

Residue 30–37 participates in ATP binding; sequence MGNLHDGH. The Proton donor role is filled by His37. Gln61 serves as a coordination point for (R)-pantoate. Gln61 is a binding site for beta-alanine. 149–152 contacts ATP; that stretch reads GEKD. Gln155 serves as a coordination point for (R)-pantoate. 186-189 is an ATP binding site; sequence LSSR.

The protein belongs to the pantothenate synthetase family. In terms of assembly, homodimer.

The protein resides in the cytoplasm. The catalysed reaction is (R)-pantoate + beta-alanine + ATP = (R)-pantothenate + AMP + diphosphate + H(+). Its pathway is cofactor biosynthesis; (R)-pantothenate biosynthesis; (R)-pantothenate from (R)-pantoate and beta-alanine: step 1/1. In terms of biological role, catalyzes the condensation of pantoate with beta-alanine in an ATP-dependent reaction via a pantoyl-adenylate intermediate. The polypeptide is Pantothenate synthetase (Shigella sonnei (strain Ss046)).